The primary structure comprises 410 residues: Serine hydroxymethyltransferase (410 aa).

Residues L119 and 123–125 (GHL) each bind (6S)-5,6,7,8-tetrahydrofolate. Residue K228 is modified to N6-(pyridoxal phosphate)lysine. 351 to 353 (SPF) contributes to the (6S)-5,6,7,8-tetrahydrofolate binding site.

This sequence belongs to the SHMT family. In terms of assembly, homodimer. Requires pyridoxal 5'-phosphate as cofactor.

It is found in the cytoplasm. The catalysed reaction is (6R)-5,10-methylene-5,6,7,8-tetrahydrofolate + glycine + H2O = (6S)-5,6,7,8-tetrahydrofolate + L-serine. The protein operates within one-carbon metabolism; tetrahydrofolate interconversion. Its pathway is amino-acid biosynthesis; glycine biosynthesis; glycine from L-serine: step 1/1. Catalyzes the reversible interconversion of serine and glycine with tetrahydrofolate (THF) serving as the one-carbon carrier. This reaction serves as the major source of one-carbon groups required for the biosynthesis of purines, thymidylate, methionine, and other important biomolecules. Also exhibits THF-independent aldolase activity toward beta-hydroxyamino acids, producing glycine and aldehydes, via a retro-aldol mechanism. In Alkaliphilus metalliredigens (strain QYMF), this protein is Serine hydroxymethyltransferase.